A 374-amino-acid polypeptide reads, in one-letter code: Aminodeoxychorismate lyase (374 aa).

It belongs to the class-IV pyridoxal-phosphate-dependent aminotransferase family. Homodimer. Pyridoxal 5'-phosphate is required as a cofactor.

Its subcellular location is the cytoplasm. The enzyme catalyses 4-amino-4-deoxychorismate = 4-aminobenzoate + pyruvate + H(+). The protein operates within cofactor biosynthesis; tetrahydrofolate biosynthesis; 4-aminobenzoate from chorismate: step 2/2. Converts 4-amino-4-deoxychorismate into 4-aminobenzoate (PABA) and pyruvate. This Saccharomyces cerevisiae (strain ATCC 204508 / S288c) (Baker's yeast) protein is Aminodeoxychorismate lyase (ABZ2).